A 327-amino-acid polypeptide reads, in one-letter code: MAEITATVRPTREEVVPSRKRVKLPAWLEVAKPRLIPLLLATTLGGMALSEGWPLSSPRLVCTLGGGALASAAAGVLNCLWEQDLDGRMARTSGRALPSGRLSPTSAFIGAIACTLAAAMLLVSGVNCLAAGLSLLGLCSYVLLYTALLKPRTSQNIVIGGVAGAIPPLVGAAAATGHVGLGGWWLFALVMVWTPAHFWALALLLREDYRAVGIPMLPVVKGPVVTARAIKTYGWITVLLSSLGVFALPSGGAFYGVMLLPYNARLLQLVDRLSLDPDSLVNAKALFRWSILYLFGVCLLLILSRTDLASGFTHQVIQLLSLPTGVH.

Helical transmembrane passes span 35-55 (LIPLLLATTLGGMALSEGWPL), 60-80 (LVCTLGGGALASAAAGVLNCL), 106-126 (SAFIGAIACTLAAAMLLVSGV), 129-149 (LAAGLSLLGLCSYVLLYTALL), 157-177 (IVIGGVAGAIPPLVGAAAATG), 185-205 (WLFALVMVWTPAHFWALALLL), 234-254 (GWITVLLSSLGVFALPSGGAF), and 283-303 (AKALFRWSILYLFGVCLLLIL).

It belongs to the UbiA prenyltransferase family. Protoheme IX farnesyltransferase subfamily.

It is found in the cell inner membrane. The enzyme catalyses heme b + (2E,6E)-farnesyl diphosphate + H2O = Fe(II)-heme o + diphosphate. It participates in porphyrin-containing compound metabolism; heme O biosynthesis; heme O from protoheme: step 1/1. In terms of biological role, converts heme B (protoheme IX) to heme O by substitution of the vinyl group on carbon 2 of heme B porphyrin ring with a hydroxyethyl farnesyl side group. In Synechococcus sp. (strain CC9605), this protein is Protoheme IX farnesyltransferase.